Reading from the N-terminus, the 835-residue chain is Lon protease (835 aa).

The Lon N-terminal domain occupies 36–234 (VHVFPLLRRP…KALILLKKEL (199 aa)). 387–394 (GPPGVGKT) contributes to the ATP binding site. Positions 646–828 (RTPVGVCMGL…DQVFKISFPN (183 aa)) constitute a Lon proteolytic domain. Catalysis depends on residues Ser734 and Lys777.

This sequence belongs to the peptidase S16 family. As to quaternary structure, homohexamer. Organized in a ring with a central cavity.

The protein resides in the cytoplasm. The catalysed reaction is Hydrolysis of proteins in presence of ATP.. In terms of biological role, ATP-dependent serine protease that mediates the selective degradation of mutant and abnormal proteins as well as certain short-lived regulatory proteins. Required for cellular homeostasis and for survival from DNA damage and developmental changes induced by stress. Degrades polypeptides processively to yield small peptide fragments that are 5 to 10 amino acids long. Binds to DNA in a double-stranded, site-specific manner. This Protochlamydia amoebophila (strain UWE25) protein is Lon protease.